The chain runs to 577 residues: Steryl-sulfatase (577 aa).

The signal sequence occupies residues 1 to 19 (MLWPCLLALLLSQLNFLCA). The Lumenal segment spans residues 21-183 (RPGPGPNFLL…GTVFGSAQQV (163 aa)). D34 and D35 together coordinate Ca(2+). N46 carries N-linked (GlcNAc...) asparagine glycosylation. A Ca(2+)-binding site is contributed by C74. C74 acts as the Nucleophile in catalysis. The residue at position 74 (C74) is a 3-oxoalanine (Cys). The active site involves H135. Cystine bridges form between C140-C147 and C169-C241. Residues 184 to 207 (FVVLPMNILGAVLLAMALARWAGL) traverse the membrane as a helical segment. At 208 to 211 (ARPP) the chain is on the cytoplasmic side. The chain crosses the membrane as a helical span at residues 212–233 (GWVFGVTVAAMAAVGGAYVAFL). Residues 234-577 (YHFRPANCFL…PLACRCAGDG (344 aa)) are Lumenal-facing. Residue N332 is glycosylated (N-linked (GlcNAc...) asparagine). The Ca(2+) site is built by D341 and H342. Cystine bridges form between C445/C488, C480/C486, and C561/C571. A glycan (N-linked (GlcNAc...) asparagine) is linked at N458.

This sequence belongs to the sulfatase family. In terms of assembly, homodimer. Ca(2+) is required as a cofactor. Post-translationally, the conversion to 3-oxoalanine (also known as C-formylglycine, FGly), of a serine or cysteine residue in prokaryotes and of a cysteine residue in eukaryotes, is critical for catalytic activity.

It localises to the microsome membrane. It is found in the endoplasmic reticulum membrane. The enzyme catalyses dehydroepiandrosterone 3-sulfate + H2O = 3beta-hydroxyandrost-5-en-17-one + sulfate + H(+). The catalysed reaction is estrone 3-sulfate + H2O = estrone + sulfate + H(+). Its function is as follows. Catalyzes the conversion of sulfated steroid precursors, such as dehydroepiandrosterone sulfate (DHEA-S) and estrone sulfate to the free steroid. In Rattus norvegicus (Rat), this protein is Steryl-sulfatase (Sts).